Reading from the N-terminus, the 588-residue chain is Adenine deaminase (588 aa).

The protein belongs to the metallo-dependent hydrolases superfamily. Adenine deaminase family. In terms of assembly, homodimer. Requires Mn(2+) as cofactor.

It carries out the reaction adenine + H2O + H(+) = hypoxanthine + NH4(+). This is Adenine deaminase from Escherichia coli (strain SE11).